The following is a 373-amino-acid chain: tRNA-specific 2-thiouridylase MnmA (373 aa).

Residues 12–19 (GMSGGVDS) and Met38 each bind ATP. The segment at 98-100 (NPD) is interaction with target base in tRNA. The active-site Nucleophile is the Cys103. Residues Cys103 and Cys200 are joined by a disulfide bond. Gly127 contributes to the ATP binding site. The interval 150-152 (KDQ) is interaction with tRNA. The Cysteine persulfide intermediate role is filled by Cys200. Residues 312–313 (RY) form an interaction with tRNA region.

The protein belongs to the MnmA/TRMU family.

Its subcellular location is the cytoplasm. It carries out the reaction S-sulfanyl-L-cysteinyl-[protein] + uridine(34) in tRNA + AH2 + ATP = 2-thiouridine(34) in tRNA + L-cysteinyl-[protein] + A + AMP + diphosphate + H(+). Catalyzes the 2-thiolation of uridine at the wobble position (U34) of tRNA, leading to the formation of s(2)U34. The chain is tRNA-specific 2-thiouridylase MnmA from Streptococcus uberis (strain ATCC BAA-854 / 0140J).